A 1131-amino-acid chain; its full sequence is cGMP-specific 3',5'-cyclic phosphodiesterase (1131 aa).

Disordered regions lie at residues 1-26 (MTDVSSPAGGAASPVEMATSSSSAAT) and 42-150 (GVAP…SQQD). The span at 42 to 63 (GVAPGAVPGPGSAAIPASSSSG) shows a compositional bias: low complexity. The span at 75–86 (SNNNRPAATNRS) shows a compositional bias: polar residues. Low complexity predominate over residues 110-136 (SSSTPSQSPSPSQSPSQASIQTQTSQQ). GAF domains follow at residues 255 to 412 (DIDV…GIGI) and 444 to 625 (NLEC…GLGI). The PDEase domain occupies 655–978 (SQDQTEKLTQ…RNWQDLAEKV (324 aa)). Histidine 731 (proton donor) is an active-site residue. The a divalent metal cation site is built by histidine 735, histidine 771, aspartate 772, and aspartate 882. Disordered stretches follow at residues 1019–1048 (QQSQHGSEDSHTPEHQRSGSRLSMKKTGAL) and 1078–1131 (SHVS…CALL). Basic and acidic residues-rich tracts occupy residues 1024 to 1035 (GSEDSHTPEHQR) and 1078 to 1088 (SHVSEDMDDKS). A compositionally biased stretch (low complexity) spans 1097-1117 (ASGSMGRMSASSSTSSAGGQM). Over residues 1121–1131 (SKKRSKLCALL) the composition is skewed to basic residues. Residue cysteine 1128 is modified to Cysteine methyl ester. Residue cysteine 1128 is the site of S-farnesyl cysteine attachment. Residues 1129–1131 (ALL) constitute a propeptide, removed in mature form.

The protein belongs to the cyclic nucleotide phosphodiesterase family. Interacts with PrBP. Requires a divalent metal cation as cofactor.

It is found in the cell membrane. It carries out the reaction 3',5'-cyclic GMP + H2O = GMP + H(+). Its function is as follows. Has a role regulating cGMP transport in Malpighian tubule principal cells. This is cGMP-specific 3',5'-cyclic phosphodiesterase from Drosophila erecta (Fruit fly).